We begin with the raw amino-acid sequence, 321 residues long: Lipoyl synthase (321 aa).

7 residues coordinate [4Fe-4S] cluster: C68, C73, C79, C94, C98, C101, and S308. The Radical SAM core domain maps to 80–297 (FNHGTATFMI…KQEALAMGFT (218 aa)).

This sequence belongs to the radical SAM superfamily. Lipoyl synthase family. It depends on [4Fe-4S] cluster as a cofactor.

The protein resides in the cytoplasm. It carries out the reaction [[Fe-S] cluster scaffold protein carrying a second [4Fe-4S](2+) cluster] + N(6)-octanoyl-L-lysyl-[protein] + 2 oxidized [2Fe-2S]-[ferredoxin] + 2 S-adenosyl-L-methionine + 4 H(+) = [[Fe-S] cluster scaffold protein] + N(6)-[(R)-dihydrolipoyl]-L-lysyl-[protein] + 4 Fe(3+) + 2 hydrogen sulfide + 2 5'-deoxyadenosine + 2 L-methionine + 2 reduced [2Fe-2S]-[ferredoxin]. Its pathway is protein modification; protein lipoylation via endogenous pathway; protein N(6)-(lipoyl)lysine from octanoyl-[acyl-carrier-protein]: step 2/2. Its function is as follows. Catalyzes the radical-mediated insertion of two sulfur atoms into the C-6 and C-8 positions of the octanoyl moiety bound to the lipoyl domains of lipoate-dependent enzymes, thereby converting the octanoylated domains into lipoylated derivatives. This Sodalis glossinidius (strain morsitans) protein is Lipoyl synthase.